A 351-amino-acid polypeptide reads, in one-letter code: Secreted frizzled-related sequence protein 4 (351 aa).

An N-terminal signal peptide occupies residues 1–18 (MLRSILVALCLWLRLALG). Residues 19–139 (VRGAPCEAVR…VYDRGVCISP (121 aa)) form the FZ domain. 5 cysteine pairs are disulfide-bonded: C24–C85, C32–C78, C69–C108, C97–C136, and C101–C125. N-linked (GlcNAc...) asparagine glycans are attached at residues N38 and N68. N-linked (GlcNAc...) asparagine glycosylation is found at N116, N194, and N240. The region spanning 178-306 (CKCKKVKPTL…TIQDKKQIAS (129 aa)) is the NTR domain. Residues 293–303 (EQQRTIQDKKQ) show a composition bias toward basic and acidic residues. The tract at residues 293 to 351 (EQQRTIQDKKQIASRTSRTSRSNPPKSKGRPPAPKPASPKKNIKARSAPKKSNLKKSAS) is disordered. Low complexity predominate over residues 306–318 (SRTSRTSRSNPPK). Positions 333 to 351 (KNIKARSAPKKSNLKKSAS) are enriched in basic residues.

This sequence belongs to the secreted frizzled-related protein (sFRP) family. In terms of tissue distribution, expressed in the ovary. Localized to granulosa cells of periovulatory follicles and corpora lutea. Weakly expressed in adult tissues including kidney, brain and lung.

Its subcellular location is the secreted. Its function is as follows. Soluble frizzled-related proteins (sFRPS) function as modulators of Wnt signaling through direct interaction with Wnts. They have a role in regulating cell growth and differentiation in specific cell types. SFRP4 plays a role in bone morphogenesis. May also act as a regulator of adult uterine morphology and function. May also increase apoptosis during ovulation possibly through modulation of FZ1/FZ4/WNT4 signaling. Has phosphaturic effects by specifically inhibiting sodium-dependent phosphate uptake. This Mus musculus (Mouse) protein is Secreted frizzled-related sequence protein 4 (Sfrp4).